The following is a 392-amino-acid chain: Succinate--CoA ligase [ADP-forming] subunit beta (392 aa).

The ATP-grasp domain occupies 9–236 (KELFAAHGVP…PSAADPLEAK (228 aa)). Residues lysine 45, 52–54 (GRG), valine 94, and glutamate 99 contribute to the ATP site. Mg(2+) contacts are provided by asparagine 191 and aspartate 205. Residues asparagine 256 and 318–320 (GIT) each bind substrate.

It belongs to the succinate/malate CoA ligase beta subunit family. As to quaternary structure, heterotetramer of two alpha and two beta subunits. Mg(2+) is required as a cofactor.

It carries out the reaction succinate + ATP + CoA = succinyl-CoA + ADP + phosphate. The enzyme catalyses GTP + succinate + CoA = succinyl-CoA + GDP + phosphate. It participates in carbohydrate metabolism; tricarboxylic acid cycle; succinate from succinyl-CoA (ligase route): step 1/1. In terms of biological role, succinyl-CoA synthetase functions in the citric acid cycle (TCA), coupling the hydrolysis of succinyl-CoA to the synthesis of either ATP or GTP and thus represents the only step of substrate-level phosphorylation in the TCA. The beta subunit provides nucleotide specificity of the enzyme and binds the substrate succinate, while the binding sites for coenzyme A and phosphate are found in the alpha subunit. The chain is Succinate--CoA ligase [ADP-forming] subunit beta from Acidothermus cellulolyticus (strain ATCC 43068 / DSM 8971 / 11B).